Consider the following 185-residue polypeptide: Elongation factor P (185 aa).

It belongs to the elongation factor P family.

Its subcellular location is the cytoplasm. It functions in the pathway protein biosynthesis; polypeptide chain elongation. Functionally, involved in peptide bond synthesis. Stimulates efficient translation and peptide-bond synthesis on native or reconstituted 70S ribosomes in vitro. Probably functions indirectly by altering the affinity of the ribosome for aminoacyl-tRNA, thus increasing their reactivity as acceptors for peptidyl transferase. This chain is Elongation factor P, found in Anoxybacillus flavithermus (strain DSM 21510 / WK1).